The following is a 227-amino-acid chain: ATP synthase subunit a (227 aa).

Helical transmembrane passes span 16–36, 79–99, 105–125, 176–196, and 202–222; these read AFVY…VAYI, LVAT…IPGF, SLNL…FEGI, LFLL…AFAL, and VLQT…AVAI.

It belongs to the ATPase A chain family. In terms of assembly, F-type ATPases have 2 components, CF(1) - the catalytic core - and CF(0) - the membrane proton channel. CF(1) has five subunits: alpha(3), beta(3), gamma(1), delta(1), epsilon(1). CF(0) has three main subunits: a(1), b(2) and c(9-12). The alpha and beta chains form an alternating ring which encloses part of the gamma chain. CF(1) is attached to CF(0) by a central stalk formed by the gamma and epsilon chains, while a peripheral stalk is formed by the delta and b chains.

The protein localises to the cell inner membrane. In terms of biological role, key component of the proton channel; it plays a direct role in the translocation of protons across the membrane. The polypeptide is ATP synthase subunit a (Campylobacter concisus (strain 13826)).